The following is a 233-amino-acid chain: 2-phytyl-1,4-naphtoquinone methyltransferase (233 aa).

It belongs to the class I-like SAM-binding methyltransferase superfamily. MenG/UbiE family.

It carries out the reaction demethylphylloquinol + S-adenosyl-L-methionine = phylloquinol + S-adenosyl-L-homocysteine + H(+). It functions in the pathway cofactor biosynthesis; phylloquinone biosynthesis. Functionally, methyltransferase required for the conversion of 2-phytyl-1,4-beta-naphthoquinol to phylloquinol. The sequence is that of 2-phytyl-1,4-naphtoquinone methyltransferase from Synechococcus elongatus (strain ATCC 33912 / PCC 7942 / FACHB-805) (Anacystis nidulans R2).